Reading from the N-terminus, the 1022-residue chain is Probable E3 ubiquitin-protein ligase HERC6 (1022 aa).

5 RCC1 repeats span residues 41 to 92 (NHRV…AVCH), 93 to 145 (KGRV…ALSK), 147 to 198 (SQVF…ALSL), 200 to 253 (GTSF…VLTQ), and 254 to 304 (DGKV…AYVH). Residues 693–1017 (EATDFCKVLV…INNNRGFVSP (325 aa)) form the HECT domain. The Glycyl thioester intermediate role is filled by Cys985.

As to expression, detected in brain, heart, placenta and testis.

It localises to the cytoplasm. The protein resides in the cytosol. It carries out the reaction S-ubiquitinyl-[E2 ubiquitin-conjugating enzyme]-L-cysteine + [acceptor protein]-L-lysine = [E2 ubiquitin-conjugating enzyme]-L-cysteine + N(6)-ubiquitinyl-[acceptor protein]-L-lysine.. It participates in protein modification; protein ubiquitination. E3 ubiquitin-protein ligase which accepts ubiquitin from an E2 ubiquitin-conjugating enzyme in the form of a thioester and then directly transfers the ubiquitin to targeted substrates. This chain is Probable E3 ubiquitin-protein ligase HERC6 (HERC6), found in Homo sapiens (Human).